The chain runs to 849 residues: A-kinase anchor protein 4 (849 aa).

Residues 1–188 constitute a propeptide that is removed on maturation; sequence MIAYCGTTTM…MAASKNTNNN (188 aa). Residues S96, S130, S190, and S204 each carry the phosphoserine modification. Over residues 183–205 the composition is skewed to polar residues; sequence KNTNNNQSPSNPATKSPSNQRSV. Residues 183–210 form a disordered region; that stretch reads KNTNNNQSPSNPATKSPSNQRSVATPEG. The residue at position 207 (T207) is a Phosphothreonine. A phosphoserine mark is found at S213, S226, and S271. The PKA-RI and PKA-RII subunit binding domain stretch occupies residues 219-232; that stretch reads FYVNRLSSLVIQMA. Position 301 is a phosphotyrosine (Y301). Phosphoserine is present on residues S302, S341, S431, S442, S444, S463, S492, S497, and S504. Positions 335–344 are PKA-RI-alpha subunit binding domain; that stretch reads YANQVASDMM. T506 carries the post-translational modification Phosphothreonine. S538 is modified (phosphoserine). Residue S583 is modified to Phosphoserine; by STK33. S628, S633, S652, and S702 each carry phosphoserine.

It belongs to the AKAP110 family. As to quaternary structure, interacts with PRKAR1A and PRKAR2A. Interacts with ENO4. Interacts with QRICH2. In terms of processing, phosphorylated by STK33 during sperm flagella assembly. Expressed in the fibrous sheath of spermatozoa (at protein level). Expressed in step 1 to step 6 spermatids, abundance then increases during steps 8 to 12, abundance decreases thereafter.

It is found in the cell projection. Its subcellular location is the cilium. The protein resides in the flagellum. Major structural component of sperm fibrous sheath. Plays a role in sperm motility. The chain is A-kinase anchor protein 4 from Mus musculus (Mouse).